Consider the following 345-residue polypeptide: uncharacterized protein (345 aa).

2 consecutive PDZ GRASP-type domains span residues 27-112 and 118-207; these read CGFR…WASI and AIWH…HGVL. Residues 27–223 form a GRASP region; it reads CGFRVLKVEN…LSGPPPQPGD (197 aa). The disordered stretch occupies residues 229 to 345; the sequence is PMLGGPDHKV…APQNEELVKN (117 aa). Residues 297 to 308 show a composition bias toward basic and acidic residues; sequence KLSRELDHKTKD. Polar residues-rich tracts occupy residues 309-318 and 328-338; these read ASSTNDSQTT and VNSTNDESAPQ.

It is found in the golgi apparatus membrane. This is an uncharacterized protein from Schizosaccharomyces pombe (strain 972 / ATCC 24843) (Fission yeast).